The sequence spans 572 residues: Cytosolic Fe-S cluster assembly factor NAR1 (572 aa).

Positions 20, 62, 65, 68, 205, and 260 each coordinate [4Fe-4S] cluster. Positions 416-436 (ARPSRMPGGKPIGSARRPNGK) are disordered. [4Fe-4S] cluster is bound by residues Cys450 and Cys454.

It belongs to the NARF family.

Component of the cytosolic Fe/S protein assembly machinery. Required for maturation of extramitochondrial Fe/S proteins. May play a role in the transfer of pre-assembled Fe/S clusters to target apoproteins. This Botryotinia fuckeliana (strain B05.10) (Noble rot fungus) protein is Cytosolic Fe-S cluster assembly factor NAR1 (NAR1).